The chain runs to 351 residues: Histidinol-phosphate aminotransferase (351 aa).

The residue at position 221 (Lys-221) is an N6-(pyridoxal phosphate)lysine.

This sequence belongs to the class-II pyridoxal-phosphate-dependent aminotransferase family. Histidinol-phosphate aminotransferase subfamily. In terms of assembly, homodimer. The cofactor is pyridoxal 5'-phosphate.

The catalysed reaction is L-histidinol phosphate + 2-oxoglutarate = 3-(imidazol-4-yl)-2-oxopropyl phosphate + L-glutamate. The protein operates within amino-acid biosynthesis; L-histidine biosynthesis; L-histidine from 5-phospho-alpha-D-ribose 1-diphosphate: step 7/9. This Staphylococcus epidermidis (strain ATCC 12228 / FDA PCI 1200) protein is Histidinol-phosphate aminotransferase.